The sequence spans 67 residues: ATP synthase F(0) complex subunit 8 (67 aa).

A helical transmembrane segment spans residues 8 to 24; that stretch reads TWFTTILATITTLFILF. An N6-acetyllysine; alternate modification is found at Lys54. Position 54 is an N6-succinyllysine; alternate (Lys54). Lys57 is modified (N6-acetyllysine).

Belongs to the ATPase protein 8 family. As to quaternary structure, component of the ATP synthase complex composed at least of ATP5F1A/subunit alpha, ATP5F1B/subunit beta, ATP5MC1/subunit c (homooctomer), MT-ATP6/subunit a, MT-ATP8/subunit 8, ATP5ME/subunit e, ATP5MF/subunit f, ATP5MG/subunit g, ATP5MK/subunit k, ATP5MJ/subunit j, ATP5F1C/subunit gamma, ATP5F1D/subunit delta, ATP5F1E/subunit epsilon, ATP5PF/subunit F6, ATP5PB/subunit b, ATP5PD/subunit d, ATP5PO/subunit OSCP. ATP synthase complex consists of a soluble F(1) head domain (subunits alpha(3) and beta(3)) - the catalytic core - and a membrane F(0) domain - the membrane proton channel (subunits c, a, 8, e, f, g, k and j). These two domains are linked by a central stalk (subunits gamma, delta, and epsilon) rotating inside the F1 region and a stationary peripheral stalk (subunits F6, b, d, and OSCP). Interacts with PRICKLE3.

Its subcellular location is the mitochondrion membrane. Subunit 8, of the mitochondrial membrane ATP synthase complex (F(1)F(0) ATP synthase or Complex V) that produces ATP from ADP in the presence of a proton gradient across the membrane which is generated by electron transport complexes of the respiratory chain. ATP synthase complex consist of a soluble F(1) head domain - the catalytic core - and a membrane F(1) domain - the membrane proton channel. These two domains are linked by a central stalk rotating inside the F(1) region and a stationary peripheral stalk. During catalysis, ATP synthesis in the catalytic domain of F(1) is coupled via a rotary mechanism of the central stalk subunits to proton translocation. In vivo, can only synthesize ATP although its ATP hydrolase activity can be activated artificially in vitro. Part of the complex F(0) domain. The sequence is that of ATP synthase F(0) complex subunit 8 from Talpa europaea (European mole).